Consider the following 373-residue polypeptide: Peptide chain release factor 1-like, mitochondrial (373 aa).

Residues 1–13 (MRSGFLRSARRLW) constitute a mitochondrion transit peptide. The stretch at 56–111 (QLAAAARLLNEKERELRDTESLLHDENEDLKKLAESEIALCQKEIAELKHRIISLL) forms a coiled coil. The segment at 229–293 (PKDLRIDTKR…LRARLYSMRL (65 aa)) is GGQ domain. The GGQ signature appears at 243–245 (GGQ). The residue at position 245 (Q245) is an N5-methylglutamine.

It belongs to the prokaryotic/mitochondrial release factor family. Methylation of glutamine in the GGQ triplet by HEMK1 is conserved from bacteria to mammals.

It localises to the mitochondrion. Mitochondrial peptide chain release factor that directs the termination of translation in response to the peptide chain termination codons UAA and UAG. The chain is Peptide chain release factor 1-like, mitochondrial (Mtrf1l) from Rattus norvegicus (Rat).